Consider the following 660-residue polypeptide: Bifunctional polymyxin resistance protein ArnA (660 aa).

Positions 1–304 are formyltransferase ArnAFT; the sequence is MKTVVFAYHD…TLGLVQGSRL (304 aa). 86–88 contributes to the (6R)-10-formyltetrahydrofolate binding site; that stretch reads HLI. His-104 (proton donor; for formyltransferase activity) is an active-site residue. Residues Arg-114 and 136-140 contribute to the (6R)-10-formyltetrahydrofolate site; that span reads VKRAD. Residues 314-660 are dehydrogenase ArnADH; that stretch reads RRTRVLILGV…RTVDLTDKPS (347 aa). NAD(+)-binding positions include Asp-347 and 368 to 369; that span reads DI. Residues Ala-393, Tyr-398, and 432 to 433 contribute to the UDP-alpha-D-glucuronate site; that span reads TS. Glu-434 serves as the catalytic Proton acceptor; for decarboxylase activity. UDP-alpha-D-glucuronate contacts are provided by residues Arg-460, Asn-492, 526–535, and Tyr-613; that span reads KLIDGGKQKR. The Proton donor; for decarboxylase activity role is filled by Arg-619.

It in the N-terminal section; belongs to the Fmt family. UDP-L-Ara4N formyltransferase subfamily. In the C-terminal section; belongs to the NAD(P)-dependent epimerase/dehydratase family. UDP-glucuronic acid decarboxylase subfamily. Homohexamer, formed by a dimer of trimers.

The enzyme catalyses UDP-alpha-D-glucuronate + NAD(+) = UDP-beta-L-threo-pentopyranos-4-ulose + CO2 + NADH. The catalysed reaction is UDP-4-amino-4-deoxy-beta-L-arabinose + (6R)-10-formyltetrahydrofolate = UDP-4-deoxy-4-formamido-beta-L-arabinose + (6S)-5,6,7,8-tetrahydrofolate + H(+). Its pathway is nucleotide-sugar biosynthesis; UDP-4-deoxy-4-formamido-beta-L-arabinose biosynthesis; UDP-4-deoxy-4-formamido-beta-L-arabinose from UDP-alpha-D-glucuronate: step 1/3. It participates in nucleotide-sugar biosynthesis; UDP-4-deoxy-4-formamido-beta-L-arabinose biosynthesis; UDP-4-deoxy-4-formamido-beta-L-arabinose from UDP-alpha-D-glucuronate: step 3/3. It functions in the pathway bacterial outer membrane biogenesis; lipopolysaccharide biosynthesis. In terms of biological role, bifunctional enzyme that catalyzes the oxidative decarboxylation of UDP-glucuronic acid (UDP-GlcUA) to UDP-4-keto-arabinose (UDP-Ara4O) and the addition of a formyl group to UDP-4-amino-4-deoxy-L-arabinose (UDP-L-Ara4N) to form UDP-L-4-formamido-arabinose (UDP-L-Ara4FN). The modified arabinose is attached to lipid A and is required for resistance to polymyxin and cationic antimicrobial peptides. This Escherichia coli O1:K1 / APEC protein is Bifunctional polymyxin resistance protein ArnA.